A 763-amino-acid polypeptide reads, in one-letter code: Palmitoyltransferase AKR1 (763 aa).

A compositionally biased stretch (polar residues) spans 1–15 (MEDNSEQASVSSQAS). Residues 1-59 (MEDNSEQASVSSQASMRPLVSDNGDREAGAGVEVNIANDNDTSVGVDGENGNEDDDPIL) are disordered. Over 1–307 (MEDNSEQASV…KLVKRDDHAK (307 aa)) the chain is Cytoplasmic. ANK repeat units lie at residues 57–87 (PILS…NVSS), 92–121 (EGVT…NVES), 126–155 (LEAT…SATT), 159–188 (QGFN…SKGI), 197–226 (KGRT…SVKI), 230–259 (GGFT…DFFQ), and 292–322 (NGYP…GFAF). Residues 308–325 (IITFLIPLLVLGFAFFGF) form a helical membrane-spanning segment. Over 326–330 (SHLHI) the chain is Lumenal. Residues 331-348 (LFALPVIILLLLASNKFI) traverse the membrane as a helical segment. Residues 349 to 368 (KSFLLPSYETKGTNSASLLK) are Cytoplasmic-facing. Residues 369 to 389 (SPLIAGILFGSIFWLAFVWIL) form a helical membrane-spanning segment. Residues 390-401 (RILPYTFTKRPL) lie on the Lumenal side of the membrane. Residues 402–422 (GNLTFCAILCFVCYSLFLLAF) form a helical membrane-spanning segment. Over 423–497 (SDPGHIGSEN…YNDVGLKNHK (75 aa)) the chain is Cytoplasmic. One can recognise a DHHC domain in the interval 454–504 (SFCLETWVRKPLRSKYSYLNDALILRFDHYCPWIYNDVGLKNHKLFIFFIL). C484 serves as the catalytic S-palmitoyl cysteine intermediate. A helical transmembrane segment spans residues 498 to 518 (LFIFFILALELGIFSFVKVCL). The Lumenal portion of the chain corresponds to 519–546 (KYFDELDMDGDCFILGDDDLCSGLIGDR). The helical transmembrane segment at 547 to 567 (FTFLIMTWACIQAVWIFSLVI) threads the bilayer. At 568–763 (VQLFQITKGL…DPLSEIDDMV (196 aa)) the chain is on the cytoplasmic side.

The protein belongs to the DHHC palmitoyltransferase family. AKR/ZDHHC17 subfamily.

It localises to the early endosome membrane. It is found in the golgi apparatus membrane. It carries out the reaction L-cysteinyl-[protein] + hexadecanoyl-CoA = S-hexadecanoyl-L-cysteinyl-[protein] + CoA. Its function is as follows. Palmitoyltransferase specific for casein kinase 1. This is Palmitoyltransferase AKR1 (AKR1) from Candida glabrata (strain ATCC 2001 / BCRC 20586 / JCM 3761 / NBRC 0622 / NRRL Y-65 / CBS 138) (Yeast).